The primary structure comprises 291 residues: 3-hydroxy-5-phosphonooxypentane-2,4-dione thiolase (291 aa).

Residue Lys203 is the Schiff-base intermediate with substrate of the active site.

It belongs to the DeoC/FbaB aldolase family. As to quaternary structure, homodecamer.

It is found in the cytoplasm. It carries out the reaction dihydroxyacetone phosphate + acetyl-CoA = 3-hydroxy-2,4-dioxopentyl phosphate + CoA. In terms of biological role, involved in the degradation of phospho-AI-2, thereby terminating induction of the lsr operon and closing the AI-2 signaling cycle. Catalyzes the transfer of an acetyl moiety from 3-hydroxy-5-phosphonooxypentane-2,4-dione to CoA to form glycerone phosphate and acetyl-CoA. The polypeptide is 3-hydroxy-5-phosphonooxypentane-2,4-dione thiolase (Salmonella paratyphi A (strain ATCC 9150 / SARB42)).